The primary structure comprises 351 residues: S-adenosylmethionine:tRNA ribosyltransferase-isomerase (351 aa).

It belongs to the QueA family. As to quaternary structure, monomer.

It localises to the cytoplasm. It carries out the reaction 7-aminomethyl-7-carbaguanosine(34) in tRNA + S-adenosyl-L-methionine = epoxyqueuosine(34) in tRNA + adenine + L-methionine + 2 H(+). The protein operates within tRNA modification; tRNA-queuosine biosynthesis. Its function is as follows. Transfers and isomerizes the ribose moiety from AdoMet to the 7-aminomethyl group of 7-deazaguanine (preQ1-tRNA) to give epoxyqueuosine (oQ-tRNA). The polypeptide is S-adenosylmethionine:tRNA ribosyltransferase-isomerase (Fusobacterium nucleatum subsp. nucleatum (strain ATCC 25586 / DSM 15643 / BCRC 10681 / CIP 101130 / JCM 8532 / KCTC 2640 / LMG 13131 / VPI 4355)).